The primary structure comprises 169 residues: Peptide deformylase (169 aa).

2 residues coordinate Fe cation: cysteine 91 and histidine 133. Residue glutamate 134 is part of the active site. Residue histidine 137 coordinates Fe cation.

This sequence belongs to the polypeptide deformylase family. Requires Fe(2+) as cofactor.

The enzyme catalyses N-terminal N-formyl-L-methionyl-[peptide] + H2O = N-terminal L-methionyl-[peptide] + formate. Its function is as follows. Removes the formyl group from the N-terminal Met of newly synthesized proteins. Requires at least a dipeptide for an efficient rate of reaction. N-terminal L-methionine is a prerequisite for activity but the enzyme has broad specificity at other positions. The chain is Peptide deformylase from Escherichia coli (strain K12 / DH10B).